The sequence spans 162 residues: Functional amyloid chaperone FapA (162 aa).

Positions 1-28 are cleaved as a signal peptide; the sequence is MSGSSLRIVVPALLVIVGSVPVSLPAHA.

This sequence belongs to the FapA family. In terms of assembly, monomer in solution. Interacts with FapC but not FapB in vitro.

The protein localises to the periplasm. In terms of biological role, an intrinsically disordered chaperone for fibril amyloid FapC that guards against fibrillation within the periplasm. Upon overexpression of the endogenous six-gene locus (fapA-fapF), cells form large clumps during liquid growth, make large amounts of biofilm and produce amyloid fibrils. The sequence is that of Functional amyloid chaperone FapA from Pseudomonas aeruginosa (strain ATCC 15692 / DSM 22644 / CIP 104116 / JCM 14847 / LMG 12228 / 1C / PRS 101 / PAO1).